Consider the following 312-residue polypeptide: Ribosomal protein L11 methyltransferase (312 aa).

Positions 159, 180, 201, and 244 each coordinate S-adenosyl-L-methionine.

This sequence belongs to the methyltransferase superfamily. PrmA family.

The protein resides in the cytoplasm. It catalyses the reaction L-lysyl-[protein] + 3 S-adenosyl-L-methionine = N(6),N(6),N(6)-trimethyl-L-lysyl-[protein] + 3 S-adenosyl-L-homocysteine + 3 H(+). Functionally, methylates ribosomal protein L11. The protein is Ribosomal protein L11 methyltransferase of Desulfitobacterium hafniense (strain DSM 10664 / DCB-2).